A 121-amino-acid polypeptide reads, in one-letter code: Ribonuclease P protein component (121 aa).

It belongs to the RnpA family. As to quaternary structure, consists of a catalytic RNA component (M1 or rnpB) and a protein subunit.

The enzyme catalyses Endonucleolytic cleavage of RNA, removing 5'-extranucleotides from tRNA precursor.. RNaseP catalyzes the removal of the 5'-leader sequence from pre-tRNA to produce the mature 5'-terminus. It can also cleave other RNA substrates such as 4.5S RNA. The protein component plays an auxiliary but essential role in vivo by binding to the 5'-leader sequence and broadening the substrate specificity of the ribozyme. The polypeptide is Ribonuclease P protein component (Oceanobacillus iheyensis (strain DSM 14371 / CIP 107618 / JCM 11309 / KCTC 3954 / HTE831)).